Here is a 1008-residue protein sequence, read N- to C-terminus: PAN2-PAN3 deadenylation complex catalytic subunit PAN2 (1008 aa).

WD repeat units lie at residues 29–68, 110–149, 158–198, 200–236, and 277–316; these read GQLT…PYSR, PSLG…VTRV, HMAG…FSDV, VQDN…AMAP, and AEVA…SFAE. Positions 314–449 are linker; it reads FAEFSAPTAF…TCTEASMSSK (136 aa). Positions 450–755 constitute a USP domain; that stretch reads KVPRLYRKLE…RTVMMVYAVG (306 aa). Residues 808-976 enclose the Exonuclease domain; the sequence is AIDAEFVVLK…EDSHTALLLY (169 aa). D810, E812, D915, and D968 together coordinate a divalent metal cation.

Belongs to the peptidase C19 family. PAN2 subfamily. In terms of assembly, forms a heterotrimer with an asymmetric homodimer of the regulatory subunit PAN3 to form the poly(A)-nuclease (PAN) deadenylation complex. A divalent metal cation is required as a cofactor.

The protein resides in the cytoplasm. The catalysed reaction is Exonucleolytic cleavage of poly(A) to 5'-AMP.. Its activity is regulated as follows. Positively regulated by the regulatory subunit PAN3. Functionally, catalytic subunit of the poly(A)-nuclease (PAN) deadenylation complex, one of two cytoplasmic mRNA deadenylases involved in mRNA turnover. PAN specifically shortens poly(A) tails of RNA and the activity is stimulated by poly(A)-binding protein PAB1. PAN deadenylation is followed by rapid degradation of the shortened mRNA tails by the CCR4-NOT complex. Deadenylated mRNAs are then degraded by two alternative mechanisms, namely exosome-mediated 3'-5' exonucleolytic degradation, or deadenylation-dependent mRNA decaping and subsequent 5'-3' exonucleolytic degradation by XRN1. May also be involved in post-transcriptional maturation of mRNA poly(A) tails. The protein is PAN2-PAN3 deadenylation complex catalytic subunit PAN2 of Yarrowia lipolytica (strain CLIB 122 / E 150) (Yeast).